Here is a 283-residue protein sequence, read N- to C-terminus: Phosphate import ATP-binding protein PstB (283 aa).

The span at 1-20 (MAQTLAQTKQISQSHTFDVS) shows a compositional bias: polar residues. Residues 1 to 32 (MAQTLAQTKQISQSHTFDVSQSHHKTPDDTNS) are disordered. In terms of domain architecture, ABC transporter spans 37-278 (YSTQNLDLWY…PSNKKTEDYI (242 aa)). 69-76 (GPSGCGKS) is an ATP binding site.

Belongs to the ABC transporter superfamily. Phosphate importer (TC 3.A.1.7) family. The complex is composed of two ATP-binding proteins (PstB), two transmembrane proteins (PstC and PstA) and a solute-binding protein (PstS).

It localises to the cell membrane. It carries out the reaction phosphate(out) + ATP + H2O = ADP + 2 phosphate(in) + H(+). Its function is as follows. Part of the ABC transporter complex PstSACB involved in phosphate import. Responsible for energy coupling to the transport system. This Staphylococcus aureus (strain MRSA252) protein is Phosphate import ATP-binding protein PstB.